The following is a 206-amino-acid chain: TPR repeat-containing protein YrrB (206 aa).

TPR repeat units follow at residues 1–23, 24–57, 59–91, 93–125, 127–159, and 160–193; these read MQEG…NKED, AIPY…DSSA, TAYY…GMEN, DLFY…NEND, EARF…DPGH, and ADAF…QPDH.

As to quaternary structure, monomer.

In terms of biological role, could be an interacting mediator in the complex formation among RNA sulfuration components, RNA processing components, and aminoacyl-tRNA synthetases. The polypeptide is TPR repeat-containing protein YrrB (yrrB) (Bacillus subtilis (strain 168)).